A 185-amino-acid chain; its full sequence is NADH-ubiquinone oxidoreductase chain 6 (185 aa).

5 helical membrane-spanning segments follow: residues 3–23 (SLFMIFSLGIVGASLMVISTP), 28–48 (SVFWLVIAFVNAAVMFISLGL), 54–74 (IFIIVYVGAIAILFLFVIMLI), 87–107 (HFLPIGLSVIFLFYSLLTNSP), and 134–154 (ELVLIASLVLLVAMIGAILLA).

Belongs to the complex I subunit 6 family.

It localises to the mitochondrion membrane. The enzyme catalyses a ubiquinone + NADH + 5 H(+)(in) = a ubiquinol + NAD(+) + 4 H(+)(out). Its function is as follows. Core subunit of the mitochondrial membrane respiratory chain NADH dehydrogenase (Complex I) that is believed to belong to the minimal assembly required for catalysis. Complex I functions in the transfer of electrons from NADH to the respiratory chain. The immediate electron acceptor for the enzyme is believed to be ubiquinone. This is NADH-ubiquinone oxidoreductase chain 6 (ND6) from Sarcophyton glaucum (Toadstool umbrella leather coral).